The following is a 405-amino-acid chain: mRNA cap guanine-N(7) methyltransferase (405 aa).

The tract at residues 1–78 (MDNILNPEDN…PRLEEGHGSL (78 aa)) is disordered. Composition is skewed to polar residues over residues 9-18 (DNVSQTNTET) and 36-45 (KFTASGQNLD). A compositionally biased stretch (basic and acidic residues) spans 58 to 75 (KAGEPESPSKRPRLEEGH). The mRNA cap 0 methyltransferase domain occupies 97-404 (SRIFHLRNFN…IYLLFAFEKQ (308 aa)). 106 to 107 (NN) is a binding site for mRNA. Residues K110, G134, D156, D190, Q213, and Y218 each coordinate S-adenosyl-L-methionine.

Belongs to the class I-like SAM-binding methyltransferase superfamily. mRNA cap 0 methyltransferase family.

Its subcellular location is the nucleus. The enzyme catalyses a 5'-end (5'-triphosphoguanosine)-ribonucleoside in mRNA + S-adenosyl-L-methionine = a 5'-end (N(7)-methyl 5'-triphosphoguanosine)-ribonucleoside in mRNA + S-adenosyl-L-homocysteine. Its function is as follows. Catalytic subunit of the mRNA-capping methyltransferase RNMT:RAMAC complex that methylates the N7 position of the added guanosine to the 5'-cap structure of mRNAs. Binds RNA containing 5'-terminal GpppC. The polypeptide is mRNA cap guanine-N(7) methyltransferase (rnmt) (Xenopus tropicalis (Western clawed frog)).